Consider the following 312-residue polypeptide: 2,3-dihydroxyphenylpropionate/2,3-dihydroxicinnamic acid 1,2-dioxygenase (312 aa).

The active-site Proton donor is the His115. His179 serves as the catalytic Proton acceptor.

The protein belongs to the LigB/MhpB extradiol dioxygenase family. Homotetramer. Fe(2+) serves as cofactor.

It carries out the reaction 3-(2,3-dihydroxyphenyl)propanoate + O2 = (2Z,4E)-2-hydroxy-6-oxonona-2,4-dienedioate + H(+). The catalysed reaction is (2E)-3-(2,3-dihydroxyphenyl)prop-2-enoate + O2 = (2Z,4E,7E)-2-hydroxy-6-oxonona-2,4,7-trienedioate + H(+). It participates in aromatic compound metabolism; 3-phenylpropanoate degradation. In terms of biological role, catalyzes the non-heme iron(II)-dependent oxidative cleavage of 2,3-dihydroxyphenylpropionic acid and 2,3-dihydroxicinnamic acid into 2-hydroxy-6-ketononadienedioate and 2-hydroxy-6-ketononatrienedioate, respectively. This Mycolicibacterium paratuberculosis (strain ATCC BAA-968 / K-10) (Mycobacterium paratuberculosis) protein is 2,3-dihydroxyphenylpropionate/2,3-dihydroxicinnamic acid 1,2-dioxygenase.